The sequence spans 300 residues: Formylmethanofuran--tetrahydromethanopterin formyltransferase-like protein (300 aa).

The protein belongs to the FTR family.

The chain is Formylmethanofuran--tetrahydromethanopterin formyltransferase-like protein from Methanopyrus kandleri (strain AV19 / DSM 6324 / JCM 9639 / NBRC 100938).